Here is a 602-residue protein sequence, read N- to C-terminus: FAD-binding monooxygenase hmp7 (602 aa).

Residues 108–111, 120–121, and Tyr-126 contribute to the FAD site; these read TWYW and DV. Position 118–120 (118–120) interacts with NADP(+); sequence QCD. Residues 252-258 and 275-276 each bind NADP(+); these read TGATAVQ and RT.

The protein belongs to the FAD-binding monooxygenase family. FAD serves as cofactor.

Its pathway is secondary metabolite biosynthesis. Functionally, FAD-binding monooxygenase; part of the gene cluster that mediates the biosynthesis of hypothemycin, a resorcylic acid lactone (RAL) that irreversibly inhibits a subset of protein kinases with a conserved cysteine in the ATP binding site such as human ERK2. The first step is performed by both PKSs hmp3 and hmp8 and leads to the production of 7',8'-dehydrozearalenol (DHZ). The highly reducing PKS hpm8 synthesizes the reduced hexaketide (7S,11S,2E,8E)-7,11-dihydroxy-dodeca-2,8-dienoate, which is transferred downstream to the non-reducing PKS hpm3. Hpm3 then extends the reduced hexaketide to a nonaketide, after which regioselective cyclization and macrolactonization affords DHZ. The next step is the conversion of DHZ into aigialomycin C and is performed by the O-methyltransferase hmp5, the FAD-binding monooxygenase hmp7, and the cytochrome P450 monooxygenase hmp1. The wide substrate tolerance of the hmp5 and hmp7 implies that the reactions from DHZ to aigialomycin C can occur in any order. The steps from aigialomycin C to hypothemycin are less well established. The FAD-linked oxidoreductase hmp9 presumably catalyzes oxidation of the C-6' hydroxyl to a ketone. The timing of this oxidation is important, since the resulting enone functional group is a Michael acceptor that can react spontaneously with glutathione, an abundant metabolite in fungal cells. The glutathione S-transferase hmp2 catalyzes cis-trans isomerization of the 7',8' double bond with equilibrium favoring the trans isomer. The hpm6-encoded transporter might preferentially pump hypothemycin out of the cell relative to the trans isomer aigialomycin A. The cis-to-trans isomerization may be coupled with C-4' hydroxylation, since all known hypothemycin analogs containing the enone functional group also have hydroxyl groups at both C-4' and C-5'. This chain is FAD-binding monooxygenase hmp7, found in Hypomyces subiculosus (Nectria subiculosa).